The following is a 476-amino-acid chain: Ribosomal RNA small subunit methyltransferase F (476 aa).

S-adenosyl-L-methionine contacts are provided by residues 125–131 (AAAPGSK), E149, D176, and D194. The active-site Nucleophile is the C247.

This sequence belongs to the class I-like SAM-binding methyltransferase superfamily. RsmB/NOP family.

Its subcellular location is the cytoplasm. It catalyses the reaction cytidine(1407) in 16S rRNA + S-adenosyl-L-methionine = 5-methylcytidine(1407) in 16S rRNA + S-adenosyl-L-homocysteine + H(+). Functionally, specifically methylates the cytosine at position 1407 (m5C1407) of 16S rRNA. This is Ribosomal RNA small subunit methyltransferase F from Aeromonas salmonicida (strain A449).